The following is a 354-amino-acid chain: Peptide chain release factor 1 (354 aa).

Glutamine 230 carries the N5-methylglutamine modification.

Belongs to the prokaryotic/mitochondrial release factor family. Methylated by PrmC. Methylation increases the termination efficiency of RF1.

The protein localises to the cytoplasm. Functionally, peptide chain release factor 1 directs the termination of translation in response to the peptide chain termination codons UAG and UAA. This is Peptide chain release factor 1 from Rhodospirillum rubrum (strain ATCC 11170 / ATH 1.1.1 / DSM 467 / LMG 4362 / NCIMB 8255 / S1).